A 140-amino-acid polypeptide reads, in one-letter code: 3-hydroxyacyl-[acyl-carrier-protein] dehydratase FabZ (140 aa).

Residue His48 is part of the active site.

It belongs to the thioester dehydratase family. FabZ subfamily.

It is found in the cytoplasm. It catalyses the reaction a (3R)-hydroxyacyl-[ACP] = a (2E)-enoyl-[ACP] + H2O. Functionally, involved in unsaturated fatty acids biosynthesis. Catalyzes the dehydration of short chain beta-hydroxyacyl-ACPs and long chain saturated and unsaturated beta-hydroxyacyl-ACPs. The protein is 3-hydroxyacyl-[acyl-carrier-protein] dehydratase FabZ of Latilactobacillus sakei subsp. sakei (strain 23K) (Lactobacillus sakei subsp. sakei).